Consider the following 261-residue polypeptide: Tryptophan synthase alpha chain (261 aa).

Active-site proton acceptor residues include E47 and D58.

Belongs to the TrpA family. In terms of assembly, tetramer of two alpha and two beta chains.

The catalysed reaction is (1S,2R)-1-C-(indol-3-yl)glycerol 3-phosphate + L-serine = D-glyceraldehyde 3-phosphate + L-tryptophan + H2O. Its pathway is amino-acid biosynthesis; L-tryptophan biosynthesis; L-tryptophan from chorismate: step 5/5. The alpha subunit is responsible for the aldol cleavage of indoleglycerol phosphate to indole and glyceraldehyde 3-phosphate. The protein is Tryptophan synthase alpha chain of Neisseria meningitidis serogroup B (strain ATCC BAA-335 / MC58).